The following is a 556-amino-acid chain: Guard cell S-type anion channel SLAC1 (556 aa).

The segment at 1–103 (MERKQSNAHS…GIINGGDGRK (103 aa)) is disordered. The Cytoplasmic segment spans residues 1 to 189 (MERKQSNAHS…EQWPFLLRFP (189 aa)). Residues 10 to 36 (STFADINEVEDEAEQELQQQENNNNKR) are a coiled coil. Low complexity predominate over residues 25–34 (ELQQQENNNN). Position 59 is a phosphoserine; by SRK2E (S59). Positions 69–79 (RESRERDDKKS) are enriched in basic and acidic residues. S86, S113, and S120 each carry phosphoserine; by SRK2E. The segment covering 86 to 99 (SFGGFESGGIINGG) has biased composition (gly residues). S146 is modified (phosphoserine). A helical membrane pass occupies residues 190–210 (IGCFGICLGLSSQAVLWLALA). Over 211 to 216 (KSPATN) the chain is Extracellular. A helical membrane pass occupies residues 217-237 (FLHITPLINLVVWLFSLVVLV). Topologically, residues 238–265 (SVSFTYILKCIFYFEAVKREYFHPVRVN) are cytoplasmic. Residues 266-286 (FFFAPWVVCMFLAISVPPMFS) traverse the membrane as a helical segment. The Extracellular segment spans residues 287-295 (PNRKYLHPA). Residues 296-316 (IWCVFMGPYFFLELKIYGQWL) form a helical membrane-spanning segment. Over 317 to 325 (SGGKRRLCK) the chain is Cytoplasmic. Residues 326–346 (VANPSSHLSVVGNFVGAILAS) traverse the membrane as a helical segment. The Extracellular segment spans residues 347–352 (KVGWDE). The helical transmembrane segment at 353–373 (VAKFLWAVGFAHYLVVFVTLY) threads the bilayer. At 374 to 388 (QRLPTSEALPKELHP) the chain is on the cytoplasmic side. Residues 389-409 (VYSMFIAAPSAASIAWNTIYG) form a helical membrane-spanning segment. The Extracellular portion of the chain corresponds to 410–418 (QFDGCSRTC). The helical transmembrane segment at 419–439 (FFIALFLYISLVARINFFTGF) threads the bilayer. Residue K440 is a topological domain, cytoplasmic. The helical transmembrane segment at 441-463 (FSVAWWSYTFPMTTASVATIKYA) threads the bilayer. At 464-479 (EAVPGYPSRALALTLS) the chain is on the extracellular side. The chain crosses the membrane as a helical span at residues 480-500 (FISTAMVCVLFVSTLLHAFVW). Over 501–556 (QTLFPNDLAIAITKRKLTREKKPFKRAYDLKRWTKQALAKKISAEKDFEAEEESHH) the chain is Cytoplasmic.

Belongs to the SLAC1 S-type anion channel family. In terms of assembly, homotrimer. Interacts with SRK2E, CPK6, CPK21, CPK23 and PP2CA. The channel is inactivated upon PP2CA and ABI1 binding. Interacts with KAT1, KAT2, KAT3/KC1 and AKT2. Interacts with GHR1. Phosphorylation by SRK2E, especially on Ser-120, activates the channel. Also phosphorylated and activated by CPK21 and CPK23. Abscisic acid (ABA) promotes phosphorylation. This phosphorylation is inhibited by ABI1. Phosphorylated and activated by GHR1; this phosphorylation is repressed by ABI2 but not ABI1. Phosphorylated by HT1 on N-terminus but not C-terminus. As to expression, preferentially expressed in guard cells. Also detected in the vascular strands close to the leaf margins.

It is found in the cell membrane. Activated by GHR1-mediated phosphorylation which is negatively regulated by ABI2 but not ABI1. Activation by SRK2E/OST1 and GHR1 is repressed by HT1. Slow, weak voltage-dependent S-type anion efflux channel involved in maintenance of anion homeostasis. Cl(-) efflux through SLAC1 causes membrane depolarization, which activates outward-rectifying K1 channels, leading to KCl and water efflux to reduce turgor further and cause stomatal closure, that reduces water loss and promotes leaf turgor. Essential for stomatal closure in response to CO(2), abscisic acid (ABA), ozone O(3), light/dark transitions, humidity change, calcium ions, hydrogen peroxide H(2)O(2), reactive oxygen species (ROS), and nitric oxide. Binds to the highly selective inward-rectifying potassium channels KAT1 and AKT2, and inhibits their activities. Functions as an essential negative regulator of inward potassium channels in guard cells. Essential for the efficient stomatal closure and opening in guard cells. Involved in the local and/or systemic stomatal responses (e.g. stomatal closure) to light stress. This chain is Guard cell S-type anion channel SLAC1, found in Arabidopsis thaliana (Mouse-ear cress).